A 263-amino-acid chain; its full sequence is Heat-labile enterotoxin IIB, A chain (263 aa).

Residues 1–20 (MAKVISFFISLFLISFPLYA) form the signal peptide. 26–39 (ADSRTPDEVRRSGG) contributes to the NAD(+) binding site. Glutamate 130 is a catalytic residue. Cysteine 205 and cysteine 217 form a disulfide bridge.

Belongs to the enterotoxin A family. Heterohexamer of one A chain and of five B chains.

Functionally, the biological activity of the toxin is produced by the A chain, which activates intracellular adenyl cyclase. This chain is Heat-labile enterotoxin IIB, A chain, found in Escherichia coli.